The sequence spans 94 residues: Putative septation protein SpoVG (94 aa).

Belongs to the SpoVG family.

In terms of biological role, could be involved in septation. In Acholeplasma laidlawii (strain PG-8A), this protein is Putative septation protein SpoVG.